Reading from the N-terminus, the 345-residue chain is S-adenosylmethionine:tRNA ribosyltransferase-isomerase (345 aa).

The protein belongs to the QueA family. In terms of assembly, monomer.

It is found in the cytoplasm. It catalyses the reaction 7-aminomethyl-7-carbaguanosine(34) in tRNA + S-adenosyl-L-methionine = epoxyqueuosine(34) in tRNA + adenine + L-methionine + 2 H(+). It participates in tRNA modification; tRNA-queuosine biosynthesis. In terms of biological role, transfers and isomerizes the ribose moiety from AdoMet to the 7-aminomethyl group of 7-deazaguanine (preQ1-tRNA) to give epoxyqueuosine (oQ-tRNA). The sequence is that of S-adenosylmethionine:tRNA ribosyltransferase-isomerase from Helicobacter pylori (strain J99 / ATCC 700824) (Campylobacter pylori J99).